Here is a 91-residue protein sequence, read N- to C-terminus: Ice-structuring protein (91 aa).

An N-terminal signal peptide occupies residues M1–T21. Positions E22–D39 are cleaved as a propeptide — removed by a dipeptidylpeptidase.

This sequence belongs to the type-I AFP family.

It localises to the secreted. In terms of biological role, contributes to protect fish blood from freezing at subzero sea water temperatures. Lowers the blood freezing point. Binds to nascent ice crystals and prevents further growth. The polypeptide is Ice-structuring protein (Pseudopleuronectes americanus (Winter flounder)).